Reading from the N-terminus, the 457-residue chain is Argininosuccinate lyase (457 aa).

Belongs to the lyase 1 family. Argininosuccinate lyase subfamily.

The protein resides in the cytoplasm. It carries out the reaction 2-(N(omega)-L-arginino)succinate = fumarate + L-arginine. The protein operates within amino-acid biosynthesis; L-arginine biosynthesis; L-arginine from L-ornithine and carbamoyl phosphate: step 3/3. The chain is Argininosuccinate lyase from Haemophilus influenzae (strain PittEE).